Reading from the N-terminus, the 239-residue chain is Ribonuclease PH (239 aa).

Residues Arg86 and Gly124–Arg126 each bind phosphate.

It belongs to the RNase PH family. In terms of assembly, homohexameric ring arranged as a trimer of dimers.

The catalysed reaction is tRNA(n+1) + phosphate = tRNA(n) + a ribonucleoside 5'-diphosphate. Functionally, phosphorolytic 3'-5' exoribonuclease that plays an important role in tRNA 3'-end maturation. Removes nucleotide residues following the 3'-CCA terminus of tRNAs; can also add nucleotides to the ends of RNA molecules by using nucleoside diphosphates as substrates, but this may not be physiologically important. Probably plays a role in initiation of 16S rRNA degradation (leading to ribosome degradation) during starvation. The sequence is that of Ribonuclease PH from Rhodopseudomonas palustris (strain BisB18).